A 380-amino-acid chain; its full sequence is Cytochrome b (380 aa).

The next 4 helical transmembrane spans lie at 34 to 54 (FGSLLGICLMTQILTGLLLAM), 78 to 99 (WLIRNLHANGASFFFICIYLHI), 114 to 134 (WNTGVILLLTLMATAFVGYVL), and 179 to 199 (FFALHFLLPFMIAGLTLVHLT). Heme b is bound by residues histidine 84 and histidine 98. Heme b contacts are provided by histidine 183 and histidine 197. Histidine 202 lines the a ubiquinone pocket. Transmembrane regions (helical) follow at residues 227–247 (LKDILGFTLMFLLLTTLALFS), 289–309 (LGGVLALAASVLILFLAPFLH), 321–341 (LSQLLFWVLVANLFILTWVGS), and 348–368 (FIIIGQLASFTYFTILLILFP).

It belongs to the cytochrome b family. The cytochrome bc1 complex contains 11 subunits: 3 respiratory subunits (MT-CYB, CYC1 and UQCRFS1), 2 core proteins (UQCRC1 and UQCRC2) and 6 low-molecular weight proteins (UQCRH/QCR6, UQCRB/QCR7, UQCRQ/QCR8, UQCR10/QCR9, UQCR11/QCR10 and a cleavage product of UQCRFS1). This cytochrome bc1 complex then forms a dimer. The cofactor is heme b.

It localises to the mitochondrion inner membrane. Functionally, component of the ubiquinol-cytochrome c reductase complex (complex III or cytochrome b-c1 complex) that is part of the mitochondrial respiratory chain. The b-c1 complex mediates electron transfer from ubiquinol to cytochrome c. Contributes to the generation of a proton gradient across the mitochondrial membrane that is then used for ATP synthesis. The chain is Cytochrome b (MT-CYB) from Procellaria westlandica (Westland petrel).